Consider the following 957-residue polypeptide: Glycine dehydrogenase (decarboxylating) (957 aa).

Lys-708 carries the post-translational modification N6-(pyridoxal phosphate)lysine.

It belongs to the GcvP family. In terms of assembly, the glycine cleavage system is composed of four proteins: P, T, L and H. Pyridoxal 5'-phosphate is required as a cofactor.

It carries out the reaction N(6)-[(R)-lipoyl]-L-lysyl-[glycine-cleavage complex H protein] + glycine + H(+) = N(6)-[(R)-S(8)-aminomethyldihydrolipoyl]-L-lysyl-[glycine-cleavage complex H protein] + CO2. Its function is as follows. The glycine cleavage system catalyzes the degradation of glycine. The P protein binds the alpha-amino group of glycine through its pyridoxal phosphate cofactor; CO(2) is released and the remaining methylamine moiety is then transferred to the lipoamide cofactor of the H protein. This chain is Glycine dehydrogenase (decarboxylating), found in Escherichia coli O81 (strain ED1a).